Reading from the N-terminus, the 85-residue chain is Putative membrane protein insertion efficiency factor (85 aa).

Belongs to the UPF0161 family.

The protein resides in the cell membrane. Its function is as follows. Could be involved in insertion of integral membrane proteins into the membrane. The protein is Putative membrane protein insertion efficiency factor of Buchnera aphidicola subsp. Baizongia pistaciae (strain Bp).